The sequence spans 792 residues: MQGEDARYLKRKVKGGNIDVHPSEKALIVHYEVEATILGEMGDPMLGERKECQKIIRLKSLNANTDITSLARKVVEECKLIHPSKLNEVEQLLYYLQNRRDSLSGKEKKEKSSKPKDPPPFEGMEIDEVANINDMDEYIELLYEDIPDKVRGSALILQLARNPDNLEELLLNETALGALARVLREDWKQSVELATNIIYIFFCFSSFSQFHGLITHYKIGALCMNIIDHELKRHELWQEELSKKKKAVDEDPENQTLRKDYEKTFKKYQGLVVKQEQLLRVALYLLLNLAEDTRTELKMRNKNIVHMLVKALDRDNFELLILVVSFLKKLSIFMENKNDMVEMDIVEKLVKMIPCEHEDLLNITLRLLLNLSFDTGLRNKMVQVGLLPKLTALLGNDNYKQIAMCVLYHISMDDRFKSMFAYTDCIPQLMKMLFECSDERIDLELISFCINLAANKRNVQLICEGNGLKMLMKRALKFKDPLLMKMIRNISQHDGPTKNLFIDYVGDLAAQISNDEEEEFVIECLGTLANLTIPDLDWELVLKEYKLVPYLKDKLKPGAAEDDLVLEVVIMIGTVSMDDSCAALLAKSGIIPALIELLNAQQEDDEFVCQIIYVFYQMVFHQATRDVIIKETQAPAYLIDLMHDKNNEIRKVCDNTLDIIAEYDEEWAKKIQSEKFRWHNSQWLEMVESRQMDESEQYLYGDDRIEPYIHEGDILERPDLFYNSDGLIASEGAISPDFFNDYHLQNGDVVGQHSFPGSLGMDGFGQPVGILGRPATAYGFRPDEPYYYGYGS.

At S60 the chain carries Phosphoserine. The span at 103–119 (LSGKEKKEKSSKPKDPP) shows a compositional bias: basic and acidic residues. The disordered stretch occupies residues 103–124 (LSGKEKKEKSSKPKDPPPFEGM). 5 ARM repeats span residues 333–373 (FMEN…NLSF), 374–412 (DTGL…HISM), 494–533 (DGPT…NLTI), 578–620 (DDSC…QMVF), and 621–662 (HQAT…IIAE).

As to quaternary structure, heterotrimer of KIFAP3, KIF3A and KIF3B. Interacts with RAP1GDS1/SMG GDS. Interacts with SMC3 subunit of the cohesin complex. Post-translationally, phosphorylated on tyrosine residues by SRC in vitro; this reduces the binding affinity of the protein for RAP1GDS1.

Its function is as follows. Involved in tethering the chromosomes to the spindle pole and in chromosome movement. Binds to the tail domain of the KIF3A/KIF3B heterodimer to form a heterotrimeric KIF3 complex and may regulate the membrane binding of this complex. This is Kinesin-associated protein 3 (KIFAP3) from Homo sapiens (Human).